We begin with the raw amino-acid sequence, 498 residues long: Transcription factor bHLH78 (498 aa).

2 disordered regions span residues 1 to 24 and 207 to 297; these read MDNELFMNTEFPPPPEMATHFEHQ and LVSP…PPKD. Positions 233–246 are enriched in polar residues; sequence NPISTASPSPSFSK. Residues 259–270 show a composition bias toward basic and acidic residues; the sequence is SSEEKGGKRRRE. Over residues 271-281 the composition is skewed to acidic residues; that stretch reads EEDDEEEEGEG. The bHLH domain occupies 307–357; sequence QATDSHSLAERVRREKIGERMKLLQDLVPGCNKVTGKALMLDEIINYVQSL.

In terms of assembly, homodimer. Binds reversibly to CRY2 after blue light illumination. As to expression, expressed constitutively in roots, leaves, stems, and flowers.

The protein localises to the nucleus. Transcription factor that binds DNA to G box 5'-CACGTG-3' and to E-box 5'-CANNTG-3'. Binds to chromatin DNA of the FT gene and promotes its expression, and thus triggers flowering in response to blue light. The sequence is that of Transcription factor bHLH78 (BHLH78) from Arabidopsis thaliana (Mouse-ear cress).